The chain runs to 409 residues: Glutamyl-tRNA reductase (409 aa).

Substrate contacts are provided by residues 48-51, serine 89, 94-96, and glutamine 100; these read TCNR and ENE. Cysteine 49 serves as the catalytic Nucleophile. 165–170 provides a ligand contact to NADP(+); sequence GNGMLA.

Belongs to the glutamyl-tRNA reductase family. In terms of assembly, homodimer.

The enzyme catalyses (S)-4-amino-5-oxopentanoate + tRNA(Glu) + NADP(+) = L-glutamyl-tRNA(Glu) + NADPH + H(+). It functions in the pathway porphyrin-containing compound metabolism; protoporphyrin-IX biosynthesis; 5-aminolevulinate from L-glutamyl-tRNA(Glu): step 1/2. Its function is as follows. Catalyzes the NADPH-dependent reduction of glutamyl-tRNA(Glu) to glutamate 1-semialdehyde (GSA). The protein is Glutamyl-tRNA reductase of Thermoplasma volcanium (strain ATCC 51530 / DSM 4299 / JCM 9571 / NBRC 15438 / GSS1).